The primary structure comprises 338 residues: Anthranilate phosphoribosyltransferase (338 aa).

5-phospho-alpha-D-ribose 1-diphosphate contacts are provided by residues Gly78, 81-82 (GD), Thr86, 88-91 (NIST), 106-114 (KHGNRSVSS), and Ser118. Gly78 is a binding site for anthranilate. Ser90 lines the Mg(2+) pocket. An anthranilate-binding site is contributed by Asn109. Arg164 contacts anthranilate. Residues Asp223 and Glu224 each contribute to the Mg(2+) site.

It belongs to the anthranilate phosphoribosyltransferase family. In terms of assembly, homodimer. Mg(2+) is required as a cofactor.

It catalyses the reaction N-(5-phospho-beta-D-ribosyl)anthranilate + diphosphate = 5-phospho-alpha-D-ribose 1-diphosphate + anthranilate. The protein operates within amino-acid biosynthesis; L-tryptophan biosynthesis; L-tryptophan from chorismate: step 2/5. Its function is as follows. Catalyzes the transfer of the phosphoribosyl group of 5-phosphorylribose-1-pyrophosphate (PRPP) to anthranilate to yield N-(5'-phosphoribosyl)-anthranilate (PRA). The protein is Anthranilate phosphoribosyltransferase of Bacillus subtilis (strain 168).